A 126-amino-acid chain; its full sequence is uncharacterized protein (126 aa).

This is an uncharacterized protein from Homo sapiens (Human).